Reading from the N-terminus, the 323-residue chain is Peroxidase 16 (323 aa).

Residues 1 to 23 (MKNQSSFSIVALLLIFFSSSVFA) form the signal peptide. 4 disulfide bridges follow: C34–C113, C67–C72, C119–C319, and C198–C230. H65 (proton acceptor) is an active-site residue. The Ca(2+) site is built by D66, V69, G71, D73, and S75. A substrate-binding site is contributed by P161. H191 is a binding site for heme b. Residue T192 coordinates Ca(2+). Ca(2+)-binding residues include D243, S246, and D251.

This sequence belongs to the peroxidase family. Classical plant (class III) peroxidase subfamily. Heme b is required as a cofactor. It depends on Ca(2+) as a cofactor. In terms of tissue distribution, expressed in the whole plant, but preferentially in roots and leaves.

The protein resides in the secreted. The enzyme catalyses 2 a phenolic donor + H2O2 = 2 a phenolic radical donor + 2 H2O. Removal of H(2)O(2), oxidation of toxic reductants, biosynthesis and degradation of lignin, suberization, auxin catabolism, response to environmental stresses such as wounding, pathogen attack and oxidative stress. These functions might be dependent on each isozyme/isoform in each plant tissue. This is Peroxidase 16 (PER16) from Arabidopsis thaliana (Mouse-ear cress).